A 275-amino-acid polypeptide reads, in one-letter code: Bis(5'-nucleosyl)-tetraphosphatase, symmetrical (275 aa).

Belongs to the Ap4A hydrolase family.

The catalysed reaction is P(1),P(4)-bis(5'-adenosyl) tetraphosphate + H2O = 2 ADP + 2 H(+). Hydrolyzes diadenosine 5',5'''-P1,P4-tetraphosphate to yield ADP. In Haemophilus influenzae (strain PittGG), this protein is Bis(5'-nucleosyl)-tetraphosphatase, symmetrical.